We begin with the raw amino-acid sequence, 140 residues long: Nucleoside diphosphate kinase (140 aa).

Residues lysine 11, phenylalanine 59, arginine 87, threonine 93, arginine 104, and asparagine 114 each contribute to the ATP site. The Pros-phosphohistidine intermediate role is filled by histidine 117.

The protein belongs to the NDK family. As to quaternary structure, homotetramer. Mg(2+) serves as cofactor.

The protein resides in the cytoplasm. It carries out the reaction a 2'-deoxyribonucleoside 5'-diphosphate + ATP = a 2'-deoxyribonucleoside 5'-triphosphate + ADP. The catalysed reaction is a ribonucleoside 5'-diphosphate + ATP = a ribonucleoside 5'-triphosphate + ADP. In terms of biological role, major role in the synthesis of nucleoside triphosphates other than ATP. The ATP gamma phosphate is transferred to the NDP beta phosphate via a ping-pong mechanism, using a phosphorylated active-site intermediate. In Francisella tularensis subsp. holarctica (strain LVS), this protein is Nucleoside diphosphate kinase.